We begin with the raw amino-acid sequence, 146 residues long: Actin-depolymerizing factor 6 (146 aa).

S13 carries the phosphoserine modification. In terms of domain architecture, ADF-H spans 14–146 (GMGVADESKT…DLEVLRERAN (133 aa)).

It belongs to the actin-binding proteins ADF family. Post-translationally, phosphorylated. Expressed in vascular tissues of all organs.

Its subcellular location is the cytoplasm. It is found in the cytoskeleton. Functionally, actin-depolymerizing protein. Severs actin filaments (F-actin) and binds to actin monomers. The protein is Actin-depolymerizing factor 6 (ADF6) of Arabidopsis thaliana (Mouse-ear cress).